A 276-amino-acid chain; its full sequence is Large ribosomal subunit protein uL2 (276 aa).

2 disordered regions span residues 1 to 61 (MALK…HKQK) and 224 to 276 (AMNP…KKKN). A compositionally biased stretch (basic and acidic residues) spans 15–31 (GRIDLRKDEITAQKPEK).

It belongs to the universal ribosomal protein uL2 family. Part of the 50S ribosomal subunit. Forms a bridge to the 30S subunit in the 70S ribosome.

Its function is as follows. One of the primary rRNA binding proteins. Required for association of the 30S and 50S subunits to form the 70S ribosome, for tRNA binding and peptide bond formation. It has been suggested to have peptidyltransferase activity; this is somewhat controversial. Makes several contacts with the 16S rRNA in the 70S ribosome. This Treponema denticola (strain ATCC 35405 / DSM 14222 / CIP 103919 / JCM 8153 / KCTC 15104) protein is Large ribosomal subunit protein uL2.